We begin with the raw amino-acid sequence, 220 residues long: Ribose-5-phosphate isomerase A (220 aa).

Substrate-binding positions include 28–31 (TGST), 81–84 (DGAD), and 94–97 (KGGG). Catalysis depends on Glu103, which acts as the Proton acceptor. Lys121 contributes to the substrate binding site.

This sequence belongs to the ribose 5-phosphate isomerase family. Homodimer.

The catalysed reaction is aldehydo-D-ribose 5-phosphate = D-ribulose 5-phosphate. It participates in carbohydrate degradation; pentose phosphate pathway; D-ribose 5-phosphate from D-ribulose 5-phosphate (non-oxidative stage): step 1/1. Functionally, catalyzes the reversible conversion of ribose-5-phosphate to ribulose 5-phosphate. The chain is Ribose-5-phosphate isomerase A from Shewanella baltica (strain OS223).